The chain runs to 368 residues: Mitogen-activated protein kinase HOG1B (368 aa).

The Protein kinase domain maps to 20–299 (YVNLEPVGMG…ASQALAHPYL (280 aa)). ATP contacts are provided by residues 26-34 (VGMGAFGLV) and K49. The active-site Proton acceptor is D141. T171 carries the post-translational modification Phosphothreonine. A TXY motif is present at residues 171–173 (TGY). Y173 is subject to Phosphotyrosine.

It belongs to the protein kinase superfamily. Ser/Thr protein kinase family. MAP kinase subfamily. HOG1 sub-subfamily. It depends on Mg(2+) as a cofactor. Post-translationally, phosphorylated. Dually phosphorylated on Thr-171 and Tyr-173, which activates the enzyme. Rapidly dephosphorylated upon either hypo- or hyperosmotic shock.

The protein resides in the cytoplasm. It localises to the nucleus. It carries out the reaction L-seryl-[protein] + ATP = O-phospho-L-seryl-[protein] + ADP + H(+). It catalyses the reaction L-threonyl-[protein] + ATP = O-phospho-L-threonyl-[protein] + ADP + H(+). Its activity is regulated as follows. Activated by tyrosine and threonine phosphorylation. In terms of biological role, mitogen-activated protein kinase involved in a signal transduction pathway that is activated by changes in the osmolarity of the extracellular environment. Controls osmotic regulation of transcription of target genes. This is Mitogen-activated protein kinase HOG1B (HOG1B) from Wallemia ichthyophaga (strain EXF-994 / CBS 113033).